The chain runs to 209 residues: High-affinity nitrate transporter 3.2 (209 aa).

The N-terminal stretch at 1–22 (MAIHTLLFVSLLIFSLIESSSG) is a signal peptide. Residues 177–197 (LDIASTFFSVFSVVSLFVFFV) traverse the membrane as a helical segment.

The protein belongs to the NAR2 family. As to expression, bearly detected in roots and shoots.

The protein localises to the cell membrane. Its function is as follows. Acts as a dual component transporter with NTR2.1. Required for high-affinity nitrate transport. This Arabidopsis thaliana (Mouse-ear cress) protein is High-affinity nitrate transporter 3.2.